We begin with the raw amino-acid sequence, 81 residues long: MQFTKLATILLVSLMGSAAIAAPATNNAAVDAAADATPAVEKRGFGCPFNENECHAHCLSIGRKFGFCAGPLRATCTCGKQ.

The signal sequence occupies residues Met-1–Ala-21. A propeptide spanning residues Ala-22–Arg-43 is cleaved from the precursor. Disulfide bonds link Cys-47–Cys-68, Cys-54–Cys-76, and Cys-58–Cys-78.

Belongs to the invertebrate defensin family.

It is found in the secreted. Its function is as follows. Antibacterial peptide with potent activity against both Gram-positive and Gram-negative bacteria. May kill bacteria via an intracellular action mode to affect protein folding. Does not show effects on tested filamentous fungi or on the yeast S.cerevisiae. Does not act by destroying the membrane integrity, which is consistent with its nonamphiphilic architecture. Acts more rapidly than vancomycin, suggesting it does not act by inhibiting cell-wall biosynthesis. Does not cause hemolysis and has no cytotoxic effect on HEK cells. In vivo, is as efficient as vancomycin to protect mouse peritonitis models from S.aureus and P.aeruginosa infections. The polypeptide is Fungal defensin micasin (Arthroderma otae (Microsporum canis)).